A 362-amino-acid chain; its full sequence is Phosphoserine aminotransferase (362 aa).

Arg-43 is an L-glutamate binding site. Pyridoxal 5'-phosphate contacts are provided by residues 77–78, Trp-103, Thr-153, Asp-173, and Gln-196; that span reads AT. Position 197 is an N6-(pyridoxal phosphate)lysine (Lys-197). 238 to 239 lines the pyridoxal 5'-phosphate pocket; sequence NT.

Belongs to the class-V pyridoxal-phosphate-dependent aminotransferase family. SerC subfamily. In terms of assembly, homodimer. It depends on pyridoxal 5'-phosphate as a cofactor.

It is found in the cytoplasm. It carries out the reaction O-phospho-L-serine + 2-oxoglutarate = 3-phosphooxypyruvate + L-glutamate. It catalyses the reaction 4-(phosphooxy)-L-threonine + 2-oxoglutarate = (R)-3-hydroxy-2-oxo-4-phosphooxybutanoate + L-glutamate. It participates in amino-acid biosynthesis; L-serine biosynthesis; L-serine from 3-phospho-D-glycerate: step 2/3. It functions in the pathway cofactor biosynthesis; pyridoxine 5'-phosphate biosynthesis; pyridoxine 5'-phosphate from D-erythrose 4-phosphate: step 3/5. Catalyzes the reversible conversion of 3-phosphohydroxypyruvate to phosphoserine and of 3-hydroxy-2-oxo-4-phosphonooxybutanoate to phosphohydroxythreonine. This is Phosphoserine aminotransferase from Xylella fastidiosa (strain 9a5c).